The following is a 172-amino-acid chain: S-ribosylhomocysteine lyase (172 aa).

Fe cation contacts are provided by histidine 54, histidine 58, and cysteine 128.

This sequence belongs to the LuxS family. As to quaternary structure, homodimer. Fe cation serves as cofactor.

It catalyses the reaction S-(5-deoxy-D-ribos-5-yl)-L-homocysteine = (S)-4,5-dihydroxypentane-2,3-dione + L-homocysteine. Its function is as follows. Involved in the synthesis of autoinducer 2 (AI-2) which is secreted by bacteria and is used to communicate both the cell density and the metabolic potential of the environment. The regulation of gene expression in response to changes in cell density is called quorum sensing. Catalyzes the transformation of S-ribosylhomocysteine (RHC) to homocysteine (HC) and 4,5-dihydroxy-2,3-pentadione (DPD). This is S-ribosylhomocysteine lyase from Vibrio alginolyticus.